Consider the following 193-residue polypeptide: MRKEIILASNSPRRIYLLGQIGIDFKVVSPNVEEEGNSERRSPVDIVKSNALKKVQKVAEEYRNAIIIGADTVVVLDGEIIGKPKDERDAIRILKRLRDRYHFVFSGVAVMETPEEKVLTSVVRSKVKMRDYSDEEIERYVATGEPMDKAGAYGIQGKGALLVEKIEGDYYNIVGLPLVRLNSLLNRFGYSLL.

Catalysis depends on aspartate 71, which acts as the Proton acceptor.

The protein belongs to the Maf family. YhdE subfamily. A divalent metal cation serves as cofactor.

It is found in the cytoplasm. It carries out the reaction dTTP + H2O = dTMP + diphosphate + H(+). The catalysed reaction is UTP + H2O = UMP + diphosphate + H(+). In terms of biological role, nucleoside triphosphate pyrophosphatase that hydrolyzes dTTP and UTP. May have a dual role in cell division arrest and in preventing the incorporation of modified nucleotides into cellular nucleic acids. The sequence is that of dTTP/UTP pyrophosphatase from Dictyoglomus turgidum (strain DSM 6724 / Z-1310).